Here is an 885-residue protein sequence, read N- to C-terminus: Envelope glycoprotein gp160 (885 aa).

A signal peptide spans 1-23 (MGCLGNQLLIALLLVSVLEICCV). Topologically, residues 24-700 (QYVTVFYGVP…TSWIRYIQYG (677 aa)) are extracellular. N37 carries an N-linked (GlcNAc...) asparagine; by host glycan. C44 and C57 are disulfide-bonded. N-linked (GlcNAc...) asparagine; by host glycosylation is found at N70, N114, N148, N156, N173, N186, N201, N213, N245, N255, N279, N285, N296, N307, N317, N372, and N378. Intrachain disulfides connect C101–C221, C108–C212, C113–C170, C234–C264, and C244–C256. The segment at 113–169 (CNKTETDRWGLTGNAGTTTTAITTTATPSVAENVINESNPCIKNNSCAGLEQEPMIG) is V1. The V2 stretch occupies residues 170–212 (CKFNMTGLNRDKKKEYNETWYSRDLICEQSANESESKCYMHHC). A V3 region spans residues 312 to 344 (CRRPENKTVLPVTIMSGLVFHSQPINERPKQAW). The cysteines at positions 312 and 345 are disulfide-linked. Cystine bridges form between C396–C465 and C403–C438. The tract at residues 403–438 (CKMNWFLNWVEDRDQKGGRWKQQNRKEQQKKNYVPC) is V4. N466, N482, and N485 each carry an N-linked (GlcNAc...) asparagine; by host glycan. The segment at 481 to 488 (SNETNITM) is V5. The fusion peptide stretch occupies residues 532-552 (GVFVLGFLGFLATAGSAMGAA). Residues 595-611 (LQTRVTAIEKYLKDQAQ) are immunosuppression. N-linked (GlcNAc...) asparagine; by host glycosylation is found at N631, N640, and N656. A coiled-coil region spans residues 640–672 (NMTWQEWERQVDFLEANITQLLEEAQIQQEKNM). Positions 677-698 (KLNSWDIFGNWFDLTSWIRYIQ) are MPER; binding to GalCer. Residues 701-721 (VLIVLGVIGLRIVIYVVQMLA) traverse the membrane as a helical segment. Over 722–885 (RLRQGYRPVF…IRQGLELTLL (164 aa)) the chain is Cytoplasmic. Residues 727 to 730 (YRPV) carry the YXXV motif; contains endocytosis signal motif. The interval 743-764 (IHKGQEPPTKEGEEGDGGDRGG) is disordered. The segment covering 745-764 (KGQEPPTKEGEEGDGGDRGG) has biased composition (basic and acidic residues). C793 carries S-palmitoyl cysteine; by host lipidation. Residues 884-885 (LL) carry the Di-leucine internalization motif motif.

The mature envelope protein (Env) consists of a homotrimer of non-covalently associated gp120-gp41 heterodimers. The resulting complex protrudes from the virus surface as a spike. Interacts with host CD4 and CCR5. Gp120 also interacts with the C-type lectins CD209/DC-SIGN and CLEC4M/DC-SIGNR (collectively referred to as DC-SIGN(R)). In terms of assembly, the mature envelope protein (Env) consists of a homotrimer of non-covalently associated gp120-gp41 heterodimers. The resulting complex protrudes from the virus surface as a spike. Specific enzymatic cleavages in vivo yield mature proteins. Envelope glycoproteins are synthesized as an inactive precursor that is heavily N-glycosylated and processed likely by host cell furin in the Golgi to yield the mature SU and TM proteins. The cleavage site between SU and TM requires the minimal sequence [KR]-X-[KR]-R. In terms of processing, palmitoylation of the transmembrane protein and of Env polyprotein (prior to its proteolytic cleavage) is essential for their association with host cell membrane lipid rafts. Palmitoylation is therefore required for envelope trafficking to classical lipid rafts, but not for viral replication.

The protein resides in the virion membrane. It is found in the host cell membrane. Its subcellular location is the host endosome membrane. Functionally, the surface protein gp120 (SU) attaches the virus to the host lymphoid cell by binding to the primary receptor CD4. This interaction induces a structural rearrangement creating a high affinity binding site for a chemokine coreceptor like CCR5. This peculiar 2 stage receptor-interaction strategy allows gp120 to maintain the highly conserved coreceptor-binding site in a cryptic conformation, protected from neutralizing antibodies. These changes are transmitted to the transmembrane protein gp41 and are thought to activate its fusogenic potential by unmasking its fusion peptide. Surface protein gp120 (SU) may target the virus to gut-associated lymphoid tissue (GALT) by binding host ITGA4/ITGB7 (alpha-4/beta-7 integrins), a complex that mediates T-cell migration to the GALT. Interaction between gp120 and ITGA4/ITGB7 would allow the virus to enter GALT early in the infection, infecting and killing most of GALT's resting CD4+ T-cells. This T-cell depletion is believed to be the major insult to the host immune system leading to AIDS. In terms of biological role, the surface protein gp120 is a ligand for CD209/DC-SIGN and CLEC4M/DC-SIGNR, which are respectively found on dendritic cells (DCs), and on endothelial cells of liver sinusoids and lymph node sinuses. These interactions allow capture of viral particles at mucosal surfaces by these cells and subsequent transmission to permissive cells. DCs are professional antigen presenting cells, critical for host immunity by inducing specific immune responses against a broad variety of pathogens. They act as sentinels in various tissues where they take up antigen, process it, and present it to T-cells following migration to lymphoid organs. SIV subverts the migration properties of dendritic cells to gain access to CD4+ T-cells in lymph nodes. Virus transmission to permissive T-cells occurs either in trans (without DCs infection, through viral capture and transmission), or in cis (following DCs productive infection, through the usual CD4-gp120 interaction), thereby inducing a robust infection. In trans infection, bound virions remain infectious over days and it is proposed that they are not degraded, but protected in non-lysosomal acidic organelles within the DCs close to the cell membrane thus contributing to the viral infectious potential during DCs' migration from the periphery to the lymphoid tissues. On arrival at lymphoid tissues, intact virions recycle back to DCs' cell surface allowing virus transmission to CD4+ T-cells. Virion capture also seems to lead to MHC-II-restricted viral antigen presentation, and probably to the activation of SIV-specific CD4+ cells. Its function is as follows. The transmembrane protein gp41 (TM) acts as a class I viral fusion protein. Under the current model, the protein has at least 3 conformational states: pre-fusion native state, pre-hairpin intermediate state, and post-fusion hairpin state. During fusion of viral and target intracellular membranes, the coiled coil regions (heptad repeats) assume a trimer-of-hairpins structure, positioning the fusion peptide in close proximity to the C-terminal region of the ectodomain. The formation of this structure appears to drive apposition and subsequent fusion of viral and target cell membranes. Complete fusion occurs in host cell endosomes. The virus undergoes clathrin-dependent internalization long before endosomal fusion, thus minimizing the surface exposure of conserved viral epitopes during fusion and reducing the efficacy of inhibitors targeting these epitopes. Membranes fusion leads to delivery of the nucleocapsid into the cytoplasm. Functionally, the envelope glycoprotein gp160 precursor down-modulates cell surface CD4 antigen by interacting with it in the endoplasmic reticulum and blocking its transport to the cell surface. The gp120-gp41 heterodimer allows rapid transcytosis of the virus through CD4 negative cells such as simple epithelial monolayers of the intestinal, rectal and endocervical epithelial barriers. Both gp120 and gp41 specifically recognize glycosphingolipids galactosyl-ceramide (GalCer) or 3' sulfo-galactosyl-ceramide (GalS) present in the lipid rafts structures of epithelial cells. Binding to these alternative receptors allows the rapid transcytosis of the virus through the epithelial cells. This transcytotic vesicle-mediated transport of virions from the apical side to the basolateral side of the epithelial cells does not involve infection of the cells themselves. This chain is Envelope glycoprotein gp160 (env), found in Cercopithecidae (Old World monkeys).